The primary structure comprises 85 residues: Small ribosomal subunit protein bS18c (85 aa).

This sequence belongs to the bacterial ribosomal protein bS18 family. As to quaternary structure, part of the 30S ribosomal subunit.

It localises to the plastid. It is found in the chloroplast. The sequence is that of Small ribosomal subunit protein bS18c from Tupiella akineta (Green alga).